Consider the following 407-residue polypeptide: Peptidase T (407 aa).

H81 lines the Zn(2+) pocket. D83 is an active-site residue. D142 provides a ligand contact to Zn(2+). E176 acts as the Proton acceptor in catalysis. Zn(2+) contacts are provided by E177, D199, and H381.

This sequence belongs to the peptidase M20B family. The cofactor is Zn(2+).

The protein resides in the cytoplasm. It carries out the reaction Release of the N-terminal residue from a tripeptide.. Functionally, cleaves the N-terminal amino acid of tripeptides. This chain is Peptidase T, found in Streptococcus pneumoniae (strain Taiwan19F-14).